Consider the following 352-residue polypeptide: Histidinol-phosphate aminotransferase (352 aa).

The residue at position 221 (Lys-221) is an N6-(pyridoxal phosphate)lysine.

The protein belongs to the class-II pyridoxal-phosphate-dependent aminotransferase family. Histidinol-phosphate aminotransferase subfamily. In terms of assembly, homodimer. It depends on pyridoxal 5'-phosphate as a cofactor.

The catalysed reaction is L-histidinol phosphate + 2-oxoglutarate = 3-(imidazol-4-yl)-2-oxopropyl phosphate + L-glutamate. It participates in amino-acid biosynthesis; L-histidine biosynthesis; L-histidine from 5-phospho-alpha-D-ribose 1-diphosphate: step 7/9. The protein is Histidinol-phosphate aminotransferase of Staphylococcus aureus (strain Mu3 / ATCC 700698).